The chain runs to 270 residues: Interleukin-1 beta (270 aa).

A propeptide spanning residues 1–118 is cleaved from the precursor; it reads MATVPEPTSE…VYDDDAFVCD (118 aa).

This sequence belongs to the IL-1 family. As to quaternary structure, monomer. In its precursor form, weakly interacts with full-length MEFV; the mature cytokine does not interact at all. Interacts with integrins ITGAV:ITGBV and ITGA5:ITGB1; integrin-binding is required for IL1B signaling. Interacts with cargo receptor TMED10; the interaction is direct and is required for the secretion of IL1B mature form. Interacts with HSP90AB1; the interaction facilitates cargo translocation into the ERGIC. Interacts with HSP90B1; the interaction facilitates cargo translocation into the ERGIC.

It localises to the cytoplasm. The protein resides in the cytosol. It is found in the secreted. Its subcellular location is the lysosome. The protein localises to the extracellular exosome. In terms of biological role, potent pro-inflammatory cytokine. Initially discovered as the major endogenous pyrogen, induces prostaglandin synthesis, neutrophil influx and activation, T-cell activation and cytokine production, B-cell activation and antibody production, and fibroblast proliferation and collagen production. Promotes Th17 differentiation of T-cells. Synergizes with IL12/interleukin-12 to induce IFNG synthesis from T-helper 1 (Th1) cells. Plays a role in angiogenesis by inducing VEGF production synergistically with TNF and IL6. Involved in transduction of inflammation downstream of pyroptosis: its mature form is specifically released in the extracellular milieu by passing through the gasdermin-D (GSDMD) pore. The protein is Interleukin-1 beta (IL1B) of Eumetopias jubatus (Steller sea lion).